The chain runs to 765 residues: E3 ubiquitin-protein ligase SMURF2 (765 aa).

Positions 1–117 (MSNQGVRRNG…KDTGYQRLDL (117 aa)) constitute a C2 domain. WW domains lie at 157–190 (NDLP…RPTR), 251–284 (PDLP…DPRV), and 297–330 (GPLP…DPRL). The tract at residues 341–375 (SPNGSRAAVEAQSSSRPGQLKEQAQSVVSPGNLPE) is disordered. A compositionally biased stretch (polar residues) spans 351–369 (AQSSSRPGQLKEQAQSVVS). The HECT domain maps to 431-765 (RPKDLWKRLM…IEETCGFAVE (335 aa)). Residue cysteine 733 is the Glycyl thioester intermediate of the active site.

Its subcellular location is the nucleus. The protein resides in the cytoplasm. It is found in the cell membrane. It localises to the membrane raft. It catalyses the reaction S-ubiquitinyl-[E2 ubiquitin-conjugating enzyme]-L-cysteine + [acceptor protein]-L-lysine = [E2 ubiquitin-conjugating enzyme]-L-cysteine + N(6)-ubiquitinyl-[acceptor protein]-L-lysine.. It participates in protein modification; protein ubiquitination. In terms of biological role, E3 ubiquitin-protein ligase which accepts ubiquitin from an E2 ubiquitin-conjugating enzyme in the form of a thioester and then directly transfers the ubiquitin to targeted substrates. This is E3 ubiquitin-protein ligase SMURF2 (smurf2) from Danio rerio (Zebrafish).